The following is a 3330-amino-acid chain: Laminin subunit alpha-3 (3330 aa).

The signal sequence occupies residues 1-31 (MAVALGRAPRSLPLLLTLLLLLLLRMSPSWS). Residues 40 to 295 (SSRSLHPPYF…SIKDISVGGR (256 aa)) enclose the Laminin N-terminal domain. N-linked (GlcNAc...) asparagine glycosylation is present at asparagine 139. The interval 295–725 (RCVCNGHAEA…NNYYFPDLHH (431 aa)) is domain V. 27 disulfides stabilise this stretch: cysteine 296-cysteine 305, cysteine 298-cysteine 316, cysteine 318-cysteine 327, cysteine 330-cysteine 350, cysteine 353-cysteine 362, cysteine 355-cysteine 387, cysteine 390-cysteine 399, cysteine 402-cysteine 420, cysteine 423-cysteine 433, cysteine 425-cysteine 440, cysteine 442-cysteine 451, cysteine 454-cysteine 464, cysteine 488-cysteine 500, cysteine 490-cysteine 506, cysteine 508-cysteine 517, cysteine 520-cysteine 530, cysteine 533-cysteine 545, cysteine 535-cysteine 552, cysteine 554-cysteine 563, cysteine 566-cysteine 583, cysteine 628-cysteine 642, cysteine 630-cysteine 649, cysteine 651-cysteine 660, cysteine 663-cysteine 678, cysteine 681-cysteine 693, cysteine 683-cysteine 700, and cysteine 702-cysteine 711. Laminin EGF-like domains are found at residues 296-350 (CVCN…HNEC), 353-420 (CNCH…LHGC), 423-464 (CSCD…FPFC), 488-530 (CDCN…FPIC), 533-576 (CQCS…FPYC), 582-625 (VCHP…PRGC), 628-678 (CQCH…YFGC), and 681-725 (CQCD…DLHH). Residue asparagine 445 is glycosylated (N-linked (GlcNAc...) asparagine). Residues 793–1262 (TEAISGRITL…VAFYHNGAIP (470 aa)) form a domain IV 1 (domain IV B) region. Positions 1263 to 1462 (CECDPAGTAG…CFCFGVNTDC (200 aa)) are domain III B. 12 disulfides stabilise this stretch: cysteine 1309/cysteine 1316, cysteine 1311/cysteine 1323, cysteine 1325/cysteine 1334, cysteine 1337/cysteine 1350, cysteine 1353/cysteine 1368, cysteine 1355/cysteine 1375, cysteine 1377/cysteine 1386, cysteine 1389/cysteine 1399, cysteine 1402/cysteine 1414, cysteine 1404/cysteine 1421, cysteine 1423/cysteine 1432, and cysteine 1435/cysteine 1450. Laminin EGF-like domains lie at 1309–1352 (CNCG…GCDV), 1353–1401 (CNCS…ECVP), and 1402–1452 (CSCN…GCTK). The N-linked (GlcNAc...) asparagine glycan is linked to asparagine 1354. In terms of domain architecture, Laminin EGF-like 12; first part spans 1453-1462 (CFCFGVNTDC). The Laminin IV type A domain maps to 1466 to 1650 (HKQRAKFVDM…SGPRAHLVEM (185 aa)). The Laminin EGF-like 12; second part domain maps to 1651–1683 (CACPPDYTGDSCQGCRPGYYWDNKSLPVGRCVP). A domain III A region spans residues 1651–1818 (CACPPDYTGD…DGSPAEECDD (168 aa)). N-linked (GlcNAc...) asparagine glycosylation occurs at asparagine 1673. 8 disulfide bridges follow: cysteine 1684–cysteine 1693, cysteine 1686–cysteine 1700, cysteine 1703–cysteine 1712, cysteine 1715–cysteine 1728, cysteine 1731–cysteine 1743, cysteine 1733–cysteine 1752, cysteine 1754–cysteine 1763, and cysteine 1766–cysteine 1781. Laminin EGF-like domains lie at 1684 to 1730 (CNCN…SCRV) and 1731 to 1783 (CPCP…SCQP). In terms of domain architecture, Laminin EGF-like 15; truncated spans 1784-1818 (CNCNSNGQLGPCDPLTGDCVNQEPKDGSPAEECDD). The domain II and I stretch occupies residues 1819–2385 (CDSCVMTLLN…ARDAANKVAI (567 aa)). Coiled coils occupy residues 1851–1980 (TGAL…LRSR), 2012–2057 (VENN…HENE), 2088–2165 (LLQT…GDEL), and 2211–2238 (KRAK…QQVS). Residue asparagine 2159 is glycosylated (N-linked (GlcNAc...) asparagine). N-linked (GlcNAc...) asparagine glycosylation is present at asparagine 2261. A Cell attachment site motif is present at residues 2274 to 2276 (RGD). Positions 2318 to 2383 (SARREDFSKA…QQARDAANKV (66 aa)) form a coiled coil. N-linked (GlcNAc...) asparagine glycosylation is found at asparagine 2332, asparagine 2361, asparagine 2498, asparagine 2580, and asparagine 2747. Laminin G-like domains follow at residues 2386 to 2587 (PMRF…VEPC), 2594 to 2756 (SDKN…TKKC), 2763 to 2923 (VRTA…LGGC), 2983 to 3147 (ALQF…VSPC), and 3154 to 3327 (KGIY…LNGC). 3 disulfides stabilise this stretch: cysteine 2557–cysteine 2587, cysteine 2733–cysteine 2756, and cysteine 2891–cysteine 2923. N-linked (GlcNAc...) asparagine glycosylation occurs at asparagine 3094. An intrachain disulfide couples cysteine 3124 to cysteine 3147. An N-linked (GlcNAc...) asparagine glycan is attached at asparagine 3270. The cysteines at positions 3299 and 3327 are disulfide-linked.

In terms of assembly, laminin is a complex glycoprotein, consisting of three different polypeptide chains (alpha, beta, gamma), which are bound to each other by disulfide bonds into a cross-shaped molecule comprising one long and three short arms with globules at each end. Alpha-3 is a subunit of laminin-5 (laminin-332 or epiligrin/kalinin/nicein), laminin-6 (laminin-311 or K-laminin) and laminin-7 (laminin-321 or KS-laminin). In terms of tissue distribution, basal membrane of the upper alimentary tract and urinary and nasal epithelia, salivary glands and teeth (both variants). Isoform A is predominantly expressed in skin, hair follicles and developing neurons of the trigeminal ganglion. Isoform B was found in bronchi, alveoli, stomach, intestinal crypts, whisker pads, CNS, telencephalic neuroectoderm, thalamus, Rathke pouch and periventricular subependymal germinal layer.

It is found in the secreted. Its subcellular location is the extracellular space. The protein resides in the extracellular matrix. It localises to the basement membrane. Functionally, binding to cells via a high affinity receptor, laminin is thought to mediate the attachment, migration and organization of cells into tissues during embryonic development by interacting with other extracellular matrix components. Its function is as follows. Laminin-5 is thought to be involved in (1) cell adhesion via integrin alpha-3/beta-1 in focal adhesion and integrin alpha-6/beta-4 in hemidesmosomes, (2) signal transduction via tyrosine phosphorylation of pp125-FAK and p80, (3) differentiation of keratinocytes. In Mus musculus (Mouse), this protein is Laminin subunit alpha-3 (Lama3).